The sequence spans 65 residues: Small ribosomal subunit protein eS27 (65 aa).

Zn(2+) contacts are provided by C20, C23, C39, and C42. The C4-type zinc finger occupies 20–42 (CIDCGNEQIVFSNPATTVRCLVC).

The protein belongs to the eukaryotic ribosomal protein eS27 family. In terms of assembly, part of the 30S ribosomal subunit. Zn(2+) serves as cofactor.

This Thermococcus onnurineus (strain NA1) protein is Small ribosomal subunit protein eS27.